The sequence spans 255 residues: Flagellar brake protein YcgR (255 aa).

In terms of domain architecture, PilZ spans 130-245 (QRREHFRVPL…MAAHLQRFVM (116 aa)).

It belongs to the YcgR family. As to quaternary structure, monomer. Interacts with the flagellar basal bodies.

Its subcellular location is the bacterial flagellum basal body. In terms of biological role, acts as a flagellar brake, regulating swimming and swarming in a bis-(3'-5') cyclic diguanylic acid (c-di-GMP)-dependent manner. Binds 1 c-di-GMP dimer per subunit. Increasing levels of c-di-GMP lead to decreased motility. This is Flagellar brake protein YcgR from Thiobacillus denitrificans (strain ATCC 25259 / T1).